A 636-amino-acid chain; its full sequence is Nucleolar protein 9 (636 aa).

A disordered region spans residues 1–59; it reads MGQGPRSPHKVGRRFPAGGKRGRGAKGSGRPLPGRKRQPWPPPDGRSEPAPDSHPHLSP. Phosphoserine is present on serine 7. Over residues 45-57 the composition is skewed to basic and acidic residues; sequence GRSEPAPDSHPHL. Pumilio repeat units lie at residues 92-123 and 189-223; these read EVET…KPLC and EVCD…ESER. Residues 222–241 are disordered; the sequence is ERARPRGSQSSEAQKTPAQE. A compositionally biased stretch (polar residues) spans 228–238; it reads GSQSSEAQKTP. 4 Pumilio repeats span residues 313 to 348, 351 to 386, 509 to 544, and 547 to 581; these read SVDG…QSLF, HLQG…SPVF, LTGP…RRRV, and NLKG…KEIA.

The protein belongs to the NOP9 family.

The protein is Nucleolar protein 9 (NOP9) of Homo sapiens (Human).